The chain runs to 745 residues: Phosphoribosylformylglycinamidine synthase subunit PurL (745 aa).

The active site involves histidine 50. Residues tyrosine 53 and lysine 92 each coordinate ATP. A Mg(2+)-binding site is contributed by glutamate 94. Substrate-binding positions include serine 95–histidine 98 and arginine 117. Histidine 96 (proton acceptor) is an active-site residue. Aspartate 118 contacts Mg(2+). Substrate is bound at residue glutamine 241. Aspartate 269 lines the Mg(2+) pocket. Position 313 to 315 (glutamate 313 to glutamine 315) interacts with substrate. Residues aspartate 495 and glycine 532 each coordinate ATP. Asparagine 533 serves as a coordination point for Mg(2+). Serine 535 contributes to the substrate binding site.

The protein belongs to the FGAMS family. Monomer. Part of the FGAM synthase complex composed of 1 PurL, 1 PurQ and 2 PurS subunits.

It is found in the cytoplasm. The catalysed reaction is N(2)-formyl-N(1)-(5-phospho-beta-D-ribosyl)glycinamide + L-glutamine + ATP + H2O = 2-formamido-N(1)-(5-O-phospho-beta-D-ribosyl)acetamidine + L-glutamate + ADP + phosphate + H(+). The protein operates within purine metabolism; IMP biosynthesis via de novo pathway; 5-amino-1-(5-phospho-D-ribosyl)imidazole from N(2)-formyl-N(1)-(5-phospho-D-ribosyl)glycinamide: step 1/2. Part of the phosphoribosylformylglycinamidine synthase complex involved in the purines biosynthetic pathway. Catalyzes the ATP-dependent conversion of formylglycinamide ribonucleotide (FGAR) and glutamine to yield formylglycinamidine ribonucleotide (FGAM) and glutamate. The FGAM synthase complex is composed of three subunits. PurQ produces an ammonia molecule by converting glutamine to glutamate. PurL transfers the ammonia molecule to FGAR to form FGAM in an ATP-dependent manner. PurS interacts with PurQ and PurL and is thought to assist in the transfer of the ammonia molecule from PurQ to PurL. The sequence is that of Phosphoribosylformylglycinamidine synthase subunit PurL from Allorhizobium ampelinum (strain ATCC BAA-846 / DSM 112012 / S4) (Agrobacterium vitis (strain S4)).